A 395-amino-acid chain; its full sequence is D-alanine--D-alanine ligase (395 aa).

One can recognise an ATP-grasp domain in the interval 172–391; the sequence is KVVLGAAGIP…YTELITRLIE (220 aa). An ATP-binding site is contributed by 204 to 266; sequence DAGLTYPLFI…EQGIDGREIE (63 aa). Mg(2+)-binding residues include D345, E358, and N360.

Belongs to the D-alanine--D-alanine ligase family. The cofactor is Mg(2+). Mn(2+) is required as a cofactor.

It localises to the cytoplasm. The catalysed reaction is 2 D-alanine + ATP = D-alanyl-D-alanine + ADP + phosphate + H(+). It participates in cell wall biogenesis; peptidoglycan biosynthesis. Functionally, cell wall formation. This is D-alanine--D-alanine ligase from Bifidobacterium longum subsp. infantis (strain ATCC 15697 / DSM 20088 / JCM 1222 / NCTC 11817 / S12).